A 504-amino-acid polypeptide reads, in one-letter code: Maturase K (504 aa).

This sequence belongs to the intron maturase 2 family. MatK subfamily.

The protein localises to the plastid. Its subcellular location is the chloroplast. Functionally, usually encoded in the trnK tRNA gene intron. Probably assists in splicing its own and other chloroplast group II introns. In Hamamelis mollis (Chinese witch hazel), this protein is Maturase K.